A 213-amino-acid chain; its full sequence is Holliday junction branch migration complex subunit RuvA (213 aa).

The segment at 1–64 (MIARLVGFLV…EDSITLFGFA (64 aa)) is domain I. The domain II stretch occupies residues 65–143 (SYLERDWFRL…AIALFSSAKG (79 aa)). Residues 144-159 (DHLAVEDISQPAASAH) form a flexible linker region. The tract at residues 160–213 (HAGNFMADAVSALLNLGFKPAEAQRVVQLASEELGDQATLDSLVRLALRLSSKH) is domain III.

It belongs to the RuvA family. In terms of assembly, homotetramer. Forms an RuvA(8)-RuvB(12)-Holliday junction (HJ) complex. HJ DNA is sandwiched between 2 RuvA tetramers; dsDNA enters through RuvA and exits via RuvB. An RuvB hexamer assembles on each DNA strand where it exits the tetramer. Each RuvB hexamer is contacted by two RuvA subunits (via domain III) on 2 adjacent RuvB subunits; this complex drives branch migration. In the full resolvosome a probable DNA-RuvA(4)-RuvB(12)-RuvC(2) complex forms which resolves the HJ.

The protein localises to the cytoplasm. Functionally, the RuvA-RuvB-RuvC complex processes Holliday junction (HJ) DNA during genetic recombination and DNA repair, while the RuvA-RuvB complex plays an important role in the rescue of blocked DNA replication forks via replication fork reversal (RFR). RuvA specifically binds to HJ cruciform DNA, conferring on it an open structure. The RuvB hexamer acts as an ATP-dependent pump, pulling dsDNA into and through the RuvAB complex. HJ branch migration allows RuvC to scan DNA until it finds its consensus sequence, where it cleaves and resolves the cruciform DNA. This Zymomonas mobilis subsp. mobilis (strain ATCC 31821 / ZM4 / CP4) protein is Holliday junction branch migration complex subunit RuvA.